The sequence spans 216 residues: MANRVDHEYDYLFKMVLIGDSGVGKSNILSRFTRNEFCLESKSTIGVEFATRTLQVEGKTVKAQIWDTAGQERYRAITSAYYRGAVGALLFYDITKRQTFDNVQRWLRELRDHRDSNIVIILAGNKSDLKHLRAVSEQDDQALVKKEGLSFLETSALEALNVDKAFQTILTDIYHIISKKALAAQEAAASTALPGQGTTINVSDNSANVKRGCCST.

GTP-binding positions include 19–27 (GDSGVGKSN), 38–44 (CLESKST), 67–71 (DTAGQ), 125–128 (NKSD), and 155–157 (SAL). Positions 41 to 49 (SKSTIGVEF) match the Effector region motif. 2 S-geranylgeranyl cysteine lipidation sites follow: cysteine 213 and cysteine 214.

It belongs to the small GTPase superfamily. Rab family.

The protein localises to the cell membrane. The protein is Ras-related protein Rab11A (RAB11A) of Nicotiana tabacum (Common tobacco).